Consider the following 175-residue polypeptide: Peptide deformylase (175 aa).

Cys-96 and His-138 together coordinate Fe cation. Glu-139 is an active-site residue. Residue His-142 participates in Fe cation binding.

The protein belongs to the polypeptide deformylase family. Fe(2+) serves as cofactor.

It carries out the reaction N-terminal N-formyl-L-methionyl-[peptide] + H2O = N-terminal L-methionyl-[peptide] + formate. Removes the formyl group from the N-terminal Met of newly synthesized proteins. Requires at least a dipeptide for an efficient rate of reaction. N-terminal L-methionine is a prerequisite for activity but the enzyme has broad specificity at other positions. The sequence is that of Peptide deformylase from Helicobacter pylori (strain Shi470).